A 436-amino-acid chain; its full sequence is 3-ketoacyl-CoA thiolase (436 aa).

Cysteine 99 serves as the catalytic Acyl-thioester intermediate. Catalysis depends on proton acceptor residues histidine 392 and cysteine 422.

The protein belongs to the thiolase-like superfamily. Thiolase family. In terms of assembly, heterotetramer of two alpha chains (FadJ) and two beta chains (FadI).

The protein localises to the cytoplasm. The enzyme catalyses an acyl-CoA + acetyl-CoA = a 3-oxoacyl-CoA + CoA. It functions in the pathway lipid metabolism; fatty acid beta-oxidation. Its function is as follows. Catalyzes the final step of fatty acid oxidation in which acetyl-CoA is released and the CoA ester of a fatty acid two carbons shorter is formed. The protein is 3-ketoacyl-CoA thiolase of Shewanella amazonensis (strain ATCC BAA-1098 / SB2B).